The chain runs to 123 residues: Small ribosomal subunit protein bS16 (123 aa).

Residues 87–123 (AKNNPIKAKPGKRAQERAAEKAQKAADAAAAAADAAE) are disordered. The span at 99 to 110 (RAQERAAEKAQK) shows a compositional bias: basic and acidic residues. The segment covering 111-123 (AADAAAAAADAAE) has biased composition (low complexity).

Belongs to the bacterial ribosomal protein bS16 family.

The protein is Small ribosomal subunit protein bS16 of Rhizobium etli (strain CIAT 652).